Consider the following 89-residue polypeptide: Small ribosomal subunit protein uS15 (89 aa).

It belongs to the universal ribosomal protein uS15 family. Part of the 30S ribosomal subunit. Forms a bridge to the 50S subunit in the 70S ribosome, contacting the 23S rRNA.

Its function is as follows. One of the primary rRNA binding proteins, it binds directly to 16S rRNA where it helps nucleate assembly of the platform of the 30S subunit by binding and bridging several RNA helices of the 16S rRNA. In terms of biological role, forms an intersubunit bridge (bridge B4) with the 23S rRNA of the 50S subunit in the ribosome. The polypeptide is Small ribosomal subunit protein uS15 (Caulobacter vibrioides (strain NA1000 / CB15N) (Caulobacter crescentus)).